Consider the following 397-residue polypeptide: Putative gustatory receptor 93c (397 aa).

The Cytoplasmic portion of the chain corresponds to 1–12; the sequence is MIERLKKVSLPA. A helical membrane pass occupies residues 13–33; that stretch reads LSAFILFCSCHYGRILGVICF. Residues 34 to 87 are Extracellular-facing; that stretch reads DIGQRTSDDSLVVRNRHQFKWFCLSCRLISVTAVCCFCAPYVADIEDPYERLLQ. A helical transmembrane segment spans residues 88 to 108; the sequence is CFRLSASLICGICIIVVQVCY. Residues 109-141 are Cytoplasmic-facing; that stretch reads EKELLRMIISFLRLFRRVRRLSSLKRIGFGGKR. A helical transmembrane segment spans residues 142 to 162; it reads EFFLLLFKFICLVYELYSEIC. The Extracellular segment spans residues 163-179; it reads QLWHLPDSLSLFATLCE. Residues 180–200 traverse the membrane as a helical segment; it reads IFLEIGSLMIIHIGFVGYLSV. The Cytoplasmic portion of the chain corresponds to 201-266; it reads AALYSEVNSF…RTFHRLLELP (66 aa). The chain crosses the membrane as a helical span at residues 267–287; sequence VLIILLGKIFATTILSYEVII. At 288 to 295 the chain is on the extracellular side; sequence RPELYARK. The chain crosses the membrane as a helical span at residues 296-316; it reads IGMWGLVVKSFADVILLTLAV. The Cytoplasmic portion of the chain corresponds to 317–371; that stretch reads HEAVSSSRMMRRLSLENFPITDHKAWHMKWEMFLSRLNFFEFRVRPLGLFEVSNE. Residues 372 to 392 form a helical membrane-spanning segment; it reads VILLFLSSMITYFTYVVQYGI. The Extracellular portion of the chain corresponds to 393 to 397; sequence QTNRL.

Belongs to the insect chemoreceptor superfamily. Gustatory receptor (GR) family. Gr93a subfamily. In larvae, is expressed in neurons of the posterior pharyngeal sense organ.

Its subcellular location is the cell membrane. In terms of biological role, probable gustatory receptor which mediates acceptance or avoidance behavior, depending on its substrates. The protein is Putative gustatory receptor 93c (Gr93c) of Drosophila melanogaster (Fruit fly).